Consider the following 187-residue polypeptide: Putative glutathione-dependent formaldehyde-activating enzyme (187 aa).

The CENP-V/GFA domain occupies 20–166 (FPGGKLYCHC…FESVGLKTYD (147 aa)). Positions 27, 29, 48, 50, 53, 95, and 98 each coordinate Zn(2+).

This sequence belongs to the Gfa family. Zn(2+) is required as a cofactor.

It catalyses the reaction S-(hydroxymethyl)glutathione = glutathione + formaldehyde. It functions in the pathway one-carbon metabolism; formaldehyde degradation; formate from formaldehyde (glutathione route): step 1/3. Catalyzes the condensation of formaldehyde and glutathione to S-hydroxymethylglutathione. This is Putative glutathione-dependent formaldehyde-activating enzyme from Talaromyces marneffei (strain ATCC 18224 / CBS 334.59 / QM 7333) (Penicillium marneffei).